Consider the following 292-residue polypeptide: 4-hydroxy-tetrahydrodipicolinate synthase (292 aa).

T46 is a binding site for pyruvate. The Proton donor/acceptor role is filled by Y134. The Schiff-base intermediate with substrate role is filled by K162. I204 contributes to the pyruvate binding site.

It belongs to the DapA family. As to quaternary structure, homotetramer; dimer of dimers.

It localises to the cytoplasm. It carries out the reaction L-aspartate 4-semialdehyde + pyruvate = (2S,4S)-4-hydroxy-2,3,4,5-tetrahydrodipicolinate + H2O + H(+). The protein operates within amino-acid biosynthesis; L-lysine biosynthesis via DAP pathway; (S)-tetrahydrodipicolinate from L-aspartate: step 3/4. In terms of biological role, catalyzes the condensation of (S)-aspartate-beta-semialdehyde [(S)-ASA] and pyruvate to 4-hydroxy-tetrahydrodipicolinate (HTPA). The sequence is that of 4-hydroxy-tetrahydrodipicolinate synthase from Moorella thermoacetica (strain ATCC 39073 / JCM 9320).